The chain runs to 487 residues: Cyclic AMP-dependent transcription factor ATF-2 (487 aa).

Residues 7 to 31 (FLCTAPGCGQRFTNEDHLAVHKHKH) form a C2H2-type zinc finger. Thr-34 carries the post-translational modification Phosphothreonine; by PKC/PRKCH. Residue Ser-44 is modified to Phosphoserine. The residue at position 51 (Thr-51) is a Phosphothreonine; by MAPK11 and MAPK14. Thr-53 bears the Phosphothreonine; by MAPK1, MAPK3, MAPK11, MAPK12, MAPK14 and PLK3 mark. The residue at position 55 (Thr-55) is a Phosphothreonine; by VRK1. 2 positions are modified to phosphoserine: Ser-72 and Ser-94. At Thr-98 the chain carries Phosphothreonine. A Phosphoserine; by PKC/PRKCA and PKC/PRKCB modification is found at Ser-103. Disordered stretches follow at residues 106–137 (EEPS…PLAQ) and 241–355 (PGIP…RQKR). A Phosphoserine modification is found at Ser-118. Polar residues predominate over residues 264–275 (LTQQHPPVTNGD). Positions 278-281 (KGHG) are essential for its histone acetyltransferase activity. A compositionally biased stretch (low complexity) spans 300 to 316 (PATSTTETPASPAHTTP). Ser-310 carries the phosphoserine modification. Position 322 is a phosphoserine; by PKC/PRKCA and PKC/PRKCB (Ser-322). Basic and acidic residues predominate over residues 328-345 (AANEDPDEKRRKFLERNR). One can recognise a bZIP domain in the interval 334-397 (DEKRRKFLER…AQLKQLLLAH (64 aa)). A basic motif region spans residues 336–356 (KRRKFLERNRAAASRCRQKRK). Lys-339 carries the N6-acetyllysine modification. Ser-349 carries the phosphoserine; by PKC/PRKCA and PKC/PRKCB modification. Residue Lys-356 is modified to N6-acetyllysine. Residues 362-390 (LEKKAEDLSSLNGQLQSEVTLLRNEVAQL) are leucine-zipper. Positions 387-396 (VAQLKQLLLA) match the Nuclear export signal motif. Residues 407–453 (KKSGYHTADKDDSSEDLSVPSSPHTEAIQHSSVSTSNGVSSTSKAEA) are disordered. Phosphoserine is present on residues Ser-424 and Ser-428. Over residues 425–436 (VPSSPHTEAIQH) the composition is skewed to polar residues. Low complexity predominate over residues 437-449 (SSVSTSNGVSSTS). Phosphoserine; by ATM occurs at positions 472 and 480.

Belongs to the bZIP family. ATF subfamily. In terms of assembly, binds DNA as a dimer and can form a homodimer in the absence of DNA. Can form a heterodimer with JUN. Heterodimerization is essential for its transcriptional activity. Interacts with SMAD3 and SMAD4. Interacts with the HK1/VDAC1 complex. Interacts with NBN, MRE11, XPO1, KAT5 and CUL3. Binds through its N-terminal region to UTF1 which acts as a coactivator of ATF2 transcriptional activity. Phosphorylation of Thr-51 by MAPK14 and MAPK11, and at Thr-53 by MAPK1/ERK2, MAPK3/ERK1, MAPK11, MAPK12 and MAPK14 in response to external stimulus like insulin causes increased transcriptional activity. Phosphorylated by PLK3 following hyperosmotic stress. Also phosphorylated and activated by JNK and CaMK4. ATM-mediated phosphorylation at Ser-472 and Ser-480 stimulates its function in DNA damage response. Phosphorylation at Ser-44, Thr-55 and Ser-103 activates its transcriptional activity. Phosphorylation at Thr-51 or Thr-53 enhances acetylation of histones H2B and H4.

The protein localises to the nucleus. It is found in the cytoplasm. Its subcellular location is the mitochondrion outer membrane. In terms of biological role, transcriptional activator which regulates the transcription of various genes, including those involved in anti-apoptosis, cell growth, and DNA damage response. Dependent on its binding partner, binds to CRE (cAMP response element) consensus sequences (5'-TGACGTCA-3') or to AP-1 (activator protein 1) consensus sequences (5'-TGACTCA-3'). In the nucleus, contributes to global transcription and the DNA damage response, in addition to specific transcriptional activities that are related to cell development, proliferation and death. In the cytoplasm, interacts with and perturbs HK1- and VDAC1-containing complexes at the mitochondrial outer membrane, thereby impairing mitochondrial membrane potential, inducing mitochondrial leakage and promoting cell death. The phosphorylated form (mediated by ATM) plays a role in the DNA damage response and is involved in the ionizing radiation (IR)-induced S phase checkpoint control and in the recruitment of the MRN complex into the IR-induced foci (IRIF). Exhibits histone acetyltransferase (HAT) activity which specifically acetylates histones H2B and H4 in vitro. In concert with CUL3 and RBX1, promotes the degradation of KAT5 thereby attenuating its ability to acetylate and activate ATM. Can elicit oncogenic or tumor suppressor activities depending on the tissue or cell type. This is Cyclic AMP-dependent transcription factor ATF-2 (Atf2) from Mus musculus (Mouse).